The following is a 506-amino-acid chain: Deoxyribodipyrimidine photo-lyase (506 aa).

Positions 1–21 (MPPTSVSPPRTAPGPANPSPA) are enriched in pro residues. The tract at residues 1–33 (MPPTSVSPPRTAPGPANPSPAHPSRVRVIHPGG) is disordered. One can recognise a Photolyase/cryptochrome alpha/beta domain in the interval 38–171 (GPVVYWMLRD…AVHQVDAHNV (134 aa)). Residues Tyr268 and 282 to 285 (SGLS) contribute to the FAD site. Ser312 carries the phosphoserine modification. Residues 319 to 327 (ELVVRRELA), Lys390, Asn421, Asp427, and 427 to 429 (DGR) each bind FAD. Positions 487-506 (KKRNAEESPNPVVKLSKSQH) are disordered.

The protein belongs to the DNA photolyase class-2 family. The cofactor is FAD. In terms of tissue distribution, expressed in proliferating tissues. Highly expressed in roots and shoot apical meristem (SAM). Expressed in leaves, flag leaves, and panicle.

The protein resides in the nucleus. The enzyme catalyses cyclobutadipyrimidine (in DNA) = 2 pyrimidine residues (in DNA).. Involved in repair of UV radiation-induced DNA damage. Catalyzes the light-dependent monomerization (300-600 nm) of cyclobutylpyrimidine dimers (CPDs), which are formed between adjacent bases on the same DNA strand upon exposure to ultraviolet radiation. Required for plant survival in the presence of UV-B light. Not involved in the repair of (6-4) photoproducts. This is Deoxyribodipyrimidine photo-lyase (PHR) from Oryza sativa subsp. japonica (Rice).